Here is a 443-residue protein sequence, read N- to C-terminus: Enolase (443 aa).

Glutamine 167 serves as a coordination point for (2R)-2-phosphoglycerate. Residue glutamate 209 is the Proton donor of the active site. Mg(2+)-binding residues include aspartate 246, glutamate 291, and aspartate 318. Residues lysine 343, arginine 372, serine 373, and lysine 394 each contribute to the (2R)-2-phosphoglycerate site. The active-site Proton acceptor is the lysine 343.

This sequence belongs to the enolase family. Component of the RNA degradosome, a multiprotein complex involved in RNA processing and mRNA degradation. Requires Mg(2+) as cofactor.

Its subcellular location is the cytoplasm. It localises to the secreted. The protein localises to the cell surface. The catalysed reaction is (2R)-2-phosphoglycerate = phosphoenolpyruvate + H2O. Its pathway is carbohydrate degradation; glycolysis; pyruvate from D-glyceraldehyde 3-phosphate: step 4/5. Functionally, catalyzes the reversible conversion of 2-phosphoglycerate (2-PG) into phosphoenolpyruvate (PEP). It is essential for the degradation of carbohydrates via glycolysis. In Wigglesworthia glossinidia brevipalpis, this protein is Enolase.